A 75-amino-acid polypeptide reads, in one-letter code: Large ribosomal subunit protein bL31 (75 aa).

It belongs to the bacterial ribosomal protein bL31 family. Type A subfamily. Part of the 50S ribosomal subunit.

In terms of biological role, binds the 23S rRNA. The sequence is that of Large ribosomal subunit protein bL31 from Nitrobacter winogradskyi (strain ATCC 25391 / DSM 10237 / CIP 104748 / NCIMB 11846 / Nb-255).